Reading from the N-terminus, the 388-residue chain is MAKRRSRGDGGLHWDEKRQRWIATANLGFDPSGKRIVKRGSGKTKTEAKNKLKEVLRDHEDGLAIAPTGYTVADAVNDWLAYGLAGRDQRTVENCTHLSQKHVIPGLGARKLRDLSAEDVDRWLAAKAQTLSTRSLQAVHSCLNRAVKRAMARDKVKRNVVELCSVPQGQPGRPSKALTFAQAEAVLNAAEGTSMHAYIVVALLTGARTEELRALTWDHVFLKGSPDVEPPQPPHIAVWRSVRRGGDTKTRKSRRTLALPARCVEVLWQHFEDQGWERLAAGDKWEEHGLVFSSAVGKPLDATNVRRAFRQALKDANGINADEWTPRELRHSFVSLLSDRGVPLEEISRLVGHSGTAVTEEVYRKQIRPVIQTGAVVMDGIFKRGPAR.

A Core-binding (CB) domain is found at 70–151; the sequence is YTVADAVNDW…CLNRAVKRAM (82 aa). Residues 173-379 enclose the Tyr recombinase domain; sequence RPSKALTFAQ…VIQTGAVVMD (207 aa). Catalysis depends on residues arginine 208, lysine 249, arginine 330, and histidine 353. The O-(3'-phospho-DNA)-tyrosine intermediate role is filled by tyrosine 363.

It belongs to the 'phage' integrase family.

Its function is as follows. Required for integration of pSAM2. The protein is Integrase (int) of Streptomyces ambofaciens.